We begin with the raw amino-acid sequence, 349 residues long: tRNA pseudouridine synthase D (349 aa).

F27 serves as a coordination point for substrate. D80 serves as the catalytic Nucleophile. N129 contacts substrate. One can recognise a TRUD domain in the interval 155–303 (GVPNYFGAQR…VEAARRAMLL (149 aa)). Substrate is bound at residue F329.

The protein belongs to the pseudouridine synthase TruD family.

The enzyme catalyses uridine(13) in tRNA = pseudouridine(13) in tRNA. In terms of biological role, responsible for synthesis of pseudouridine from uracil-13 in transfer RNAs. In Citrobacter koseri (strain ATCC BAA-895 / CDC 4225-83 / SGSC4696), this protein is tRNA pseudouridine synthase D.